The chain runs to 638 residues: Growth hormone receptor (638 aa).

Residues 1 to 18 (MDLWQLLLTLALAGSSDA) form the signal peptide. Over 19 to 264 (FSGSEATAAI…SQFTCEEDFY (246 aa)) the chain is Extracellular. N-linked (GlcNAc...) asparagine glycosylation is present at N46. Disulfide bonds link C56–C66 and C101–C112. The N-linked (GlcNAc...) asparagine glycan is linked to N115. C126 and C140 form a disulfide bridge. A Fibronectin type-III domain is found at 151-254 (PPIALNWTLL…EVLYVTLPQM (104 aa)). N156, N161, and N200 each carry an N-linked (GlcNAc...) asparagine glycan. The WSXWS motif signature appears at 240 to 244 (YGEFS). Positions 260-262 (EED) are required for ADAM17-mediated proteolysis. Residues 265–288 (FPWLLIIIFGIFGLTVMLFVFLFS) traverse the membrane as a helical segment. At 289-638 (KQQRIKMLIL…STDQLNKIMP (350 aa)) the chain is on the cytoplasmic side. Residues 294–379 (KMLILPPVPV…HEKSHSNLGV (86 aa)) are required for JAK2 binding. The Box 1 motif motif lies at 297–305 (ILPPVPVPK). The UbE motif motif lies at 340-349 (DSWVEFIELD). Position 341 is a phosphoserine (S341). A disordered region spans residues 353 to 391 (PDEKTEESDTDRLLSSDHEKSHSNLGVKDGDSGRTSCCE). Positions 362–384 (TDRLLSSDHEKSHSNLGVKDGDS) are enriched in basic and acidic residues. Y487 and Y595 each carry phosphotyrosine; by JAK2.

This sequence belongs to the type I cytokine receptor family. Type 1 subfamily. As to quaternary structure, on growth hormone (GH) binding, forms homodimers and binds JAK2 via a box 1-containing domain. The soluble form (GHBP) is produced by phorbol ester-promoted proteolytic cleavage at the cell surface (shedding) by ADAM17/TACE. Shedding is inhibited by growth hormone (GH) binding to the receptor probably due to a conformational change in GHR rendering the receptor inaccessible to ADAM17. Post-translationally, on GH binding, phosphorylated on tyrosine residues in the cytoplasmic domain by JAK2. In terms of processing, ubiquitinated by the ECS(SOCS2) complex following ligand-binding and phosphorylation by JAK2, leading to its degradation by the proteasome. Regulation by the ECS(SOCS2) complex acts as a negative feedback loop of growth hormone receptor signaling. Ubiquitination is not sufficient for GHR internalization. Expressed in various tissues with high expression in liver and skeletal muscle. In terms of tissue distribution, isoform 2 is expressed in lung, stomach and muscle. As to expression, predominantly expressed in kidney, bladder, adrenal gland and brain stem. Highly expressed in placental villi.

It is found in the cell membrane. It localises to the secreted. Receptor for pituitary gland growth hormone (GH1) involved in regulating postnatal body growth. On ligand binding, couples to the JAK2/STAT5 pathway. In terms of biological role, the soluble form (GHBP) acts as a reservoir of growth hormone in plasma and may be a modulator/inhibitor of GH signaling. Functionally, up-regulates the production of the soluble Growth hormone-binding protein form (GHBP) and acts as a negative inhibitor of growth hormone signaling. In Homo sapiens (Human), this protein is Growth hormone receptor (GHR).